A 109-amino-acid chain; its full sequence is Parvalbumin beta 2 (109 aa).

Alanine 2 bears the N-acetylalanine mark. EF-hand domains follow at residues 39–74 (KSPA…FSAG) and 78–109 (LSDA…MIKA). Residues aspartate 52, aspartate 54, serine 56, phenylalanine 58, glutamate 60, glutamate 63, aspartate 91, aspartate 93, aspartate 95, lysine 97, and glutamate 102 each contribute to the Ca(2+) site.

The protein belongs to the parvalbumin family. In terms of assembly, monomer.

Functionally, in muscle, parvalbumin is thought to be involved in relaxation after contraction. It binds two calcium ions. The sequence is that of Parvalbumin beta 2 from Gadus morhua (Atlantic cod).